A 399-amino-acid chain; its full sequence is S-adenosylmethionine synthase (399 aa).

Histidine 17 is an ATP binding site. A Mg(2+)-binding site is contributed by aspartate 19. Residue glutamate 45 participates in K(+) binding. L-methionine contacts are provided by glutamate 58 and glutamine 101. The flexible loop stretch occupies residues 101 to 111; sequence QSPDIAQGVDK. Residues 176-178, 243-244, aspartate 252, 258-259, and lysine 279 contribute to the ATP site; these read DGK, RF, and RK. Residue aspartate 252 coordinates L-methionine. Lysine 283 provides a ligand contact to L-methionine.

The protein belongs to the AdoMet synthase family. In terms of assembly, homotetramer; dimer of dimers. The cofactor is Mg(2+). It depends on K(+) as a cofactor.

The protein resides in the cytoplasm. It carries out the reaction L-methionine + ATP + H2O = S-adenosyl-L-methionine + phosphate + diphosphate. It participates in amino-acid biosynthesis; S-adenosyl-L-methionine biosynthesis; S-adenosyl-L-methionine from L-methionine: step 1/1. Its function is as follows. Catalyzes the formation of S-adenosylmethionine (AdoMet) from methionine and ATP. The overall synthetic reaction is composed of two sequential steps, AdoMet formation and the subsequent tripolyphosphate hydrolysis which occurs prior to release of AdoMet from the enzyme. The protein is S-adenosylmethionine synthase of Staphylococcus epidermidis (strain ATCC 35984 / DSM 28319 / BCRC 17069 / CCUG 31568 / BM 3577 / RP62A).